The sequence spans 429 residues: 3-phosphoshikimate 1-carboxyvinyltransferase (429 aa).

3-phosphoshikimate-binding residues include K23, S24, and R28. Residue K23 coordinates phosphoenolpyruvate. Residues G95 and R123 each contribute to the phosphoenolpyruvate site. Positions 168, 170, 316, and 343 each coordinate 3-phosphoshikimate. Residue Q170 coordinates phosphoenolpyruvate. Residue D316 is the Proton acceptor of the active site. Phosphoenolpyruvate-binding residues include R347 and R389.

The protein belongs to the EPSP synthase family. As to quaternary structure, monomer.

It localises to the cytoplasm. The enzyme catalyses 3-phosphoshikimate + phosphoenolpyruvate = 5-O-(1-carboxyvinyl)-3-phosphoshikimate + phosphate. It functions in the pathway metabolic intermediate biosynthesis; chorismate biosynthesis; chorismate from D-erythrose 4-phosphate and phosphoenolpyruvate: step 6/7. Catalyzes the transfer of the enolpyruvyl moiety of phosphoenolpyruvate (PEP) to the 5-hydroxyl of shikimate-3-phosphate (S3P) to produce enolpyruvyl shikimate-3-phosphate and inorganic phosphate. The sequence is that of 3-phosphoshikimate 1-carboxyvinyltransferase from Bacillus cereus (strain G9842).